The chain runs to 479 residues: Ribosomal RNA small subunit methyltransferase F (479 aa).

S-adenosyl-L-methionine-binding positions include 125–131 (AAAPGSK), Glu149, Asp176, and Asp194. The Nucleophile role is filled by Cys247.

Belongs to the class I-like SAM-binding methyltransferase superfamily. RsmB/NOP family.

It localises to the cytoplasm. It carries out the reaction cytidine(1407) in 16S rRNA + S-adenosyl-L-methionine = 5-methylcytidine(1407) in 16S rRNA + S-adenosyl-L-homocysteine + H(+). In terms of biological role, specifically methylates the cytosine at position 1407 (m5C1407) of 16S rRNA. In Shigella boydii serotype 18 (strain CDC 3083-94 / BS512), this protein is Ribosomal RNA small subunit methyltransferase F.